Reading from the N-terminus, the 627-residue chain is Phosphomethylpyrimidine synthase (627 aa).

Residues N233, M262, Y291, H327, 347–349 (SRG), 388–391 (DGLR), and E427 each bind substrate. H431 contacts Zn(2+). Y454 provides a ligand contact to substrate. H495 serves as a coordination point for Zn(2+). [4Fe-4S] cluster contacts are provided by C575, C578, and C583.

It belongs to the ThiC family. In terms of assembly, homodimer. [4Fe-4S] cluster serves as cofactor.

It catalyses the reaction 5-amino-1-(5-phospho-beta-D-ribosyl)imidazole + S-adenosyl-L-methionine = 4-amino-2-methyl-5-(phosphooxymethyl)pyrimidine + CO + 5'-deoxyadenosine + formate + L-methionine + 3 H(+). Its pathway is cofactor biosynthesis; thiamine diphosphate biosynthesis. Its function is as follows. Catalyzes the synthesis of the hydroxymethylpyrimidine phosphate (HMP-P) moiety of thiamine from aminoimidazole ribotide (AIR) in a radical S-adenosyl-L-methionine (SAM)-dependent reaction. This Acidithiobacillus ferrooxidans (strain ATCC 23270 / DSM 14882 / CIP 104768 / NCIMB 8455) (Ferrobacillus ferrooxidans (strain ATCC 23270)) protein is Phosphomethylpyrimidine synthase.